We begin with the raw amino-acid sequence, 416 residues long: Ribulose bisphosphate carboxylase large chain (416 aa).

Substrate is bound by residues Asn-102 and Thr-152. Catalysis depends on Lys-154, which acts as the Proton acceptor. Lys-156 serves as a coordination point for substrate. The Mg(2+) site is built by Lys-180, Asp-182, and Glu-183. Lys-180 is modified (N6-carboxylysine). The active-site Proton acceptor is the His-273. Substrate contacts are provided by Arg-274, His-306, and Ser-358.

The protein belongs to the RuBisCO large chain family. Type I subfamily. Heterohexadecamer of 8 large chains and 8 small chains; disulfide-linked. The disulfide link is formed within the large subunit homodimers. Requires Mg(2+) as cofactor. The disulfide bond which can form in the large chain dimeric partners within the hexadecamer appears to be associated with oxidative stress and protein turnover.

The protein resides in the plastid. It is found in the chloroplast. The enzyme catalyses 2 (2R)-3-phosphoglycerate + 2 H(+) = D-ribulose 1,5-bisphosphate + CO2 + H2O. The catalysed reaction is D-ribulose 1,5-bisphosphate + O2 = 2-phosphoglycolate + (2R)-3-phosphoglycerate + 2 H(+). Functionally, ruBisCO catalyzes two reactions: the carboxylation of D-ribulose 1,5-bisphosphate, the primary event in carbon dioxide fixation, as well as the oxidative fragmentation of the pentose substrate in the photorespiration process. Both reactions occur simultaneously and in competition at the same active site. The protein is Ribulose bisphosphate carboxylase large chain (rbcL) of Arthropteris beckleri (Fern).